The sequence spans 404 residues: Phosphoglycerate kinase (404 aa).

Substrate is bound by residues 21-23, Arg36, 59-62, Arg119, and Arg162; these read DFN and HLGR. ATP-binding positions include Lys213, Gly300, Glu331, and 360–363; that span reads GGDS.

The protein belongs to the phosphoglycerate kinase family. Monomer.

Its subcellular location is the cytoplasm. The catalysed reaction is (2R)-3-phosphoglycerate + ATP = (2R)-3-phospho-glyceroyl phosphate + ADP. It participates in carbohydrate degradation; glycolysis; pyruvate from D-glyceraldehyde 3-phosphate: step 2/5. This is Phosphoglycerate kinase from Oenococcus oeni (strain ATCC BAA-331 / PSU-1).